Consider the following 233-residue polypeptide: MLKPSVTSAPTADMATLTVVQPLTLDRDVARAIELLEKLQESGEVPVHKLQSLKKVLQSEFCTAIREVYQYMHETITVNGCPEFRARATAKATVAAFAASEGHSHPRVVELPKTDEGLGFNVMGGKEQNSPIYISRIIPGGVAERHGGLKRGDQLLSVNGVSVEGEHHEKAVELLKAAKDSVKLVVRYTPKVLEEMEARFEKLRTARRRQQQQLLIQQQQQQQQQQTQQNHMS.

The L27 domain occupies 25–80 (LDRDVARAIELLEKLQESGEVPVHKLQSLKKVLQSEFCTAIREVYQYMHETITVNG). One can recognise a PDZ domain in the interval 108–190 (VVELPKTDEG…SVKLVVRYTP (83 aa)).

Belongs to the lin-7 family. Forms a complex with CASK and CASKIN1. Component of the brain-specific heterotrimeric complex (LIN-10-LIN-2-LIN-7 complex) composed of at least APBA1, CASK, and LIN7, which associates with the motor protein KIF17 to transport vesicles along microtubules. Can also interact with other modular proteins containing protein-protein interaction domains like PALS1, PALS2, MPP7, DLG1, DLG2 and DLG3 through its L27 domain. Interacts with DLG4, GRIN2B and MARCHF11 as well as CDH1 and CTNNB1, the channels KCNJ12/Kir2.2, KCNJ4/Kir2.3 and probably KCNJ2/Kir2.1 and SLC6A12/BGT-1 via its PDZ domain. The association of LIN7A with cadherin and beta-catenin is calcium-dependent, occurs at synaptic junctions and requires the actin cytoskeleton. Interacts with EGFR, ERBB2, ERBB3 and ERBB4 with both PDZ and KID domains. Associates with KIF17 via APBA1. Interacts with HTR4. Forms a tripartite complex composed of DLG1, MPP7 and LIN7 (LIN7A or LIN7C).

The protein localises to the cell membrane. It localises to the basolateral cell membrane. The protein resides in the cell junction. Its subcellular location is the postsynaptic density membrane. It is found in the tight junction. In terms of biological role, plays a role in establishing and maintaining the asymmetric distribution of channels and receptors at the plasma membrane of polarized cells. Forms membrane-associated multiprotein complexes that may regulate delivery and recycling of proteins to the correct membrane domains. The tripartite complex composed of LIN7 (LIN7A, LIN7B or LIN7C), CASK and APBA1 associates with the motor protein KIF17 to transport vesicles containing N-methyl-D-aspartate (NMDA) receptor subunit NR2B along microtubules. This complex may have the potential to couple synaptic vesicle exocytosis to cell adhesion in brain. Ensures the proper localization of GRIN2B (subunit 2B of the NMDA receptor) to neuronal postsynaptic density and may function in localizing synaptic vesicles at synapses where it is recruited by beta-catenin and cadherin. Required to localize Kir2 channels, GABA transporter (SLC6A12) and EGFR/ERBB1, ERBB2, ERBB3 and ERBB4 to the basolateral membrane of epithelial cells. This is Protein lin-7 homolog A (LIN7A) from Bos taurus (Bovine).